The sequence spans 832 residues: Mucosa-associated lymphoid tissue lymphoma translocation protein 1 homolog (832 aa).

The disordered stretch occupies residues 1-39; it reads MSLWGQPLQASPPLAVRQPPTASSGPSTSPPAGATLNRL. Residue S2 is modified to N-acetylserine. Residues 19–39 are compositionally biased toward low complexity; that stretch reads PPTASSGPSTSPPAGATLNRL. The Death domain maps to 45 to 132; sequence RRLSESLDRA…EVLPLLNPPG (88 aa). Ig-like C2-type domains follow at residues 131 to 207 and 218 to 314; these read PGLK…FEFS and AEVT…KKAE. Phosphoserine is present on S141. Intrachain disulfides connect C154–C196 and C257–C299. A caspase-like region spans residues 356 to 570; that stretch reads IGNMSYWEHP…SLSEKRALTD (215 aa). The Nuclear export signal motif lies at 377–384; sequence LTNLLRQL. Catalysis depends on residues H423 and C472.

The protein belongs to the peptidase C14B family. Homooligomer; forms oligomers which bind to TRAF6. Forms a complex with CARD14 and MALT1; resulting in the formation of a CBM (CARD14-BCL10-MALT1) complex. Forms a complex with CARD11 and MALT1; resulting in the formation of a CBM (CARD11-BCL10-MALT1) complex. Forms a complex with CARD9 and MALT1; resulting in the formation of a CBM (CARD9-BCL10-MALT1) complex.

Its subcellular location is the cytoplasm. The protein localises to the perinuclear region. The protein resides in the nucleus. Its function is as follows. Protease that enhances BCL10-induced activation: acts via formation of CBM complexes that channel adaptive and innate immune signaling downstream of CARD domain-containing proteins (CARD9, CARD11 and CARD14) to activate NF-kappa-B and MAP kinase p38 pathways which stimulate expression of genes encoding pro-inflammatory cytokines and chemokines. Mediates BCL10 cleavage: MALT1-dependent BCL10 cleavage plays an important role in T-cell antigen receptor-induced integrin adhesion. Involved in the induction of T helper 17 cells (Th17) differentiation. Cleaves RC3H1 and ZC3H12A in response to T-cell receptor (TCR) stimulation which releases their cooperatively repressed targets to promote Th17 cell differentiation. Also mediates cleavage of N4BP1 in T-cells following TCR-mediated activation, leading to N4BP1 inactivation. May also have ubiquitin ligase activity: binds to TRAF6, inducing TRAF6 oligomerization and activation of its ligase activity. The polypeptide is Mucosa-associated lymphoid tissue lymphoma translocation protein 1 homolog (Mus musculus (Mouse)).